We begin with the raw amino-acid sequence, 361 residues long: tRNA/tmRNA (uracil-C(5))-methyltransferase (361 aa).

Q185, Y213, N218, E234, and D294 together coordinate S-adenosyl-L-methionine. The active-site Nucleophile is the C319. E353 serves as the catalytic Proton acceptor.

The protein belongs to the class I-like SAM-binding methyltransferase superfamily. RNA M5U methyltransferase family. TrmA subfamily.

It carries out the reaction uridine(54) in tRNA + S-adenosyl-L-methionine = 5-methyluridine(54) in tRNA + S-adenosyl-L-homocysteine + H(+). It catalyses the reaction uridine(341) in tmRNA + S-adenosyl-L-methionine = 5-methyluridine(341) in tmRNA + S-adenosyl-L-homocysteine + H(+). In terms of biological role, dual-specificity methyltransferase that catalyzes the formation of 5-methyluridine at position 54 (m5U54) in all tRNAs, and that of position 341 (m5U341) in tmRNA (transfer-mRNA). This Pseudomonas putida (strain ATCC 700007 / DSM 6899 / JCM 31910 / BCRC 17059 / LMG 24140 / F1) protein is tRNA/tmRNA (uracil-C(5))-methyltransferase.